The primary structure comprises 199 residues: Protein P1 (199 aa).

This Rice tungro bacilliform virus (isolate Philippines) (RTBV) protein is Protein P1.